The sequence spans 125 residues: Ribonuclease P protein component 1 (125 aa).

Positions 1 to 13 (MRRNGKEGKDRAP) are enriched in basic and acidic residues. A disordered region spans residues 1–24 (MRRNGKEGKDRAPGRPQRKGQEVA).

The protein belongs to the eukaryotic/archaeal RNase P protein component 1 family. Consists of a catalytic RNA component and at least 4-5 protein subunits.

The protein localises to the cytoplasm. The enzyme catalyses Endonucleolytic cleavage of RNA, removing 5'-extranucleotides from tRNA precursor.. In terms of biological role, part of ribonuclease P, a protein complex that generates mature tRNA molecules by cleaving their 5'-ends. In Thermococcus onnurineus (strain NA1), this protein is Ribonuclease P protein component 1.